Reading from the N-terminus, the 269-residue chain is Gem-associated protein 2 (269 aa).

Phosphoserine occurs at positions 70 and 155.

The protein belongs to the gemin-2 family. In terms of assembly, monomer. Part of the core SMN complex that contains SMN1, GEMIN2/SIP1, DDX20/GEMIN3, GEMIN4, GEMIN5, GEMIN6, GEMIN7, GEMIN8 and STRAP/UNRIP. Part of the SMN-Sm complex that contains SMN1, GEMIN2/SIP1, DDX20/GEMIN3, GEMIN4, GEMIN5, GEMIN6, GEMIN7, GEMIN8, STRAP/UNRIP and the Sm proteins SNRPB, SNRPD1, SNRPD2, SNRPD3, SNRPE, SNRPF and SNRPG. Interacts with GEMIN5; the interaction is direct. Interacts (via C-terminus) with SMN1; the interaction is direct. Interacts with SNRPD1; the interaction is direct. Interacts with SNRPD2; the interaction is direct. Interacts (via N-terminus) with SNRPF; the interaction is direct. Interacts (via N-terminus) with SNRPE; the interaction is direct. Interacts (via N-terminus) with SNRPG; the interaction is direct.

The protein resides in the nucleus. It is found in the gem. It localises to the cytoplasm. In terms of biological role, the SMN complex catalyzes the assembly of small nuclear ribonucleoproteins (snRNPs), the building blocks of the spliceosome, and thereby plays an important role in the splicing of cellular pre-mRNAs. Most spliceosomal snRNPs contain a common set of Sm proteins SNRPB, SNRPD1, SNRPD2, SNRPD3, SNRPE, SNRPF and SNRPG that assemble in a heptameric protein ring on the Sm site of the small nuclear RNA to form the core snRNP (Sm core). In the cytosol, the Sm proteins SNRPD1, SNRPD2, SNRPE, SNRPF and SNRPG (5Sm) are trapped in an inactive 6S pICln-Sm complex by the chaperone CLNS1A that controls the assembly of the core snRNP. To assemble core snRNPs, the SMN complex accepts the trapped 5Sm proteins from CLNS1A. Binding of snRNA inside 5Sm ultimately triggers eviction of the SMN complex, thereby allowing binding of SNRPD3 and SNRPB to complete assembly of the core snRNP. Within the SMN complex, GEMIN2 constrains the conformation of 5Sm, thereby promoting 5Sm binding to snRNA containing the snRNP code (a nonameric Sm site and a 3'-adjacent stem-loop), thus preventing progression of assembly until a cognate substrate is bound. This Mus musculus (Mouse) protein is Gem-associated protein 2.